Reading from the N-terminus, the 197-residue chain is Pyridoxal 5'-phosphate synthase subunit PdxT (197 aa).

52 to 54 (GES) is an L-glutamine binding site. Cys-84 acts as the Nucleophile in catalysis. Residues Arg-111 and 139 to 140 (IR) each bind L-glutamine. Catalysis depends on charge relay system residues His-175 and Glu-177.

The protein belongs to the glutaminase PdxT/SNO family. In terms of assembly, in the presence of PdxS, forms a dodecamer of heterodimers. Only shows activity in the heterodimer.

The catalysed reaction is aldehydo-D-ribose 5-phosphate + D-glyceraldehyde 3-phosphate + L-glutamine = pyridoxal 5'-phosphate + L-glutamate + phosphate + 3 H2O + H(+). The enzyme catalyses L-glutamine + H2O = L-glutamate + NH4(+). Its pathway is cofactor biosynthesis; pyridoxal 5'-phosphate biosynthesis. In terms of biological role, catalyzes the hydrolysis of glutamine to glutamate and ammonia as part of the biosynthesis of pyridoxal 5'-phosphate. The resulting ammonia molecule is channeled to the active site of PdxS. This chain is Pyridoxal 5'-phosphate synthase subunit PdxT, found in Halorubrum lacusprofundi (strain ATCC 49239 / DSM 5036 / JCM 8891 / ACAM 34).